We begin with the raw amino-acid sequence, 328 residues long: Phenylalanine--tRNA ligase alpha subunit (328 aa).

Residue Glu245 participates in Mg(2+) binding.

The protein belongs to the class-II aminoacyl-tRNA synthetase family. Phe-tRNA synthetase alpha subunit type 1 subfamily. Tetramer of two alpha and two beta subunits. The cofactor is Mg(2+).

It is found in the cytoplasm. The enzyme catalyses tRNA(Phe) + L-phenylalanine + ATP = L-phenylalanyl-tRNA(Phe) + AMP + diphosphate + H(+). This Helicobacter pylori (strain HPAG1) protein is Phenylalanine--tRNA ligase alpha subunit.